We begin with the raw amino-acid sequence, 145 residues long: Maximins 3/H3 type 2 (145 aa).

The N-terminal stretch at 1–18 (MNFKYIVAVSFLIASAYA) is a signal peptide. 2 propeptides span residues 19 to 43 (RSVQ…LREI) and 74 to 124 (RTAE…KEKR). Isoleucine 144 is modified (isoleucine amide).

The protein belongs to the bombinin family. Expressed by the skin glands.

The protein localises to the secreted. Functionally, maximin-3 shows antibacterial activity against both Gram-positive and Gram-negative bacteria. It also shows antimicrobial activity against the fungus C.albicans, but not against A.flavus nor P.uticale. It has little hemolytic activity. It possess a significant cytotoxicity against tumor cell lines. It possess a significant anti-HIV activity. It shows high spermicidal activity. Its function is as follows. Maximin-H3 shows antibacterial activity against both Gram-positive and Gram-negative bacteria. It also shows antimicrobial activity against the fungus C.albicans. Shows strong hemolytic activity. The protein is Maximins 3/H3 type 2 of Bombina maxima (Giant fire-bellied toad).